A 466-amino-acid polypeptide reads, in one-letter code: MKKKLYIKTYGCQMNVYDSGRMADVLAPLGYEPTDAPDGADMVILNTCHIREKAAEKVYSDLGRLRPLQAARAATGGRMIVAVGGCVAQAEGAEIMMRAPHVDMVFGPQTYHQLPEMVARAVRGTGGVVNTDFPVESKFDSLPEEGASPAGPSAFLSVQEGCDKFCTYCVVPYTRGAEFSRPAARVLAEAARLVADGVAEITLLGQNVNAYHGDGPDGTTWGLGRLVRNLAEIDGLARIRYTTSHPNDMDAELIAAHAEVPQLMPFVHLPVQSGNDRILQAMNRKHTADDYRRVVERMRAARPDLALSSDFIVGFPGETDQEFADTLRLVTEIGYAQAYSFKYSARPGTPAAAMDGRQVPESVKAERLEALQQLLTAQQTAFNTACVGRVQPVLFDRRGKKPGQLLGRGPWMQAVHAEAPERLLGRIVEVRIADAHANSLSGTVVVGEHVHAHPVAPETASAEAGV.

One can recognise an MTTase N-terminal domain in the interval 3 to 123; sequence KKLYIKTYGC…LPEMVARAVR (121 aa). [4Fe-4S] cluster contacts are provided by Cys12, Cys48, Cys86, Cys162, Cys166, and Cys169. The 234-residue stretch at 148-381 folds into the Radical SAM core domain; that stretch reads SPAGPSAFLS…QQLLTAQQTA (234 aa). In terms of domain architecture, TRAM spans 384–446; sequence TACVGRVQPV…ANSLSGTVVV (63 aa).

Belongs to the methylthiotransferase family. MiaB subfamily. In terms of assembly, monomer. Requires [4Fe-4S] cluster as cofactor.

The protein resides in the cytoplasm. The enzyme catalyses N(6)-dimethylallyladenosine(37) in tRNA + (sulfur carrier)-SH + AH2 + 2 S-adenosyl-L-methionine = 2-methylsulfanyl-N(6)-dimethylallyladenosine(37) in tRNA + (sulfur carrier)-H + 5'-deoxyadenosine + L-methionine + A + S-adenosyl-L-homocysteine + 2 H(+). In terms of biological role, catalyzes the methylthiolation of N6-(dimethylallyl)adenosine (i(6)A), leading to the formation of 2-methylthio-N6-(dimethylallyl)adenosine (ms(2)i(6)A) at position 37 in tRNAs that read codons beginning with uridine. This Rhodospirillum centenum (strain ATCC 51521 / SW) protein is tRNA-2-methylthio-N(6)-dimethylallyladenosine synthase.